A 221-amino-acid polypeptide reads, in one-letter code: MSDSEEESLDRQLKIVVLGDGTSGKTSLATCFAQETFGKQYKQTIGLDFFLRRITLPGSLNVTLQVWDIGGQTIGGKMLDKYIYGAQGVLLVYDVTNYQSFENLEDWYSVVKKVSEESETQPLVALVGNKIDLEHMRTVKPEKHLRFCQENGFSSHFVSAKTGDSVFLCFQKVAAEILGIKLNKAEIEQSQRVVKADIVNYNQEPMSRTVNPPRSSMCAVQ.

Ser2 bears the N-acetylserine mark. Ser8 carries the phosphoserine modification. Gly21, Gly24, Lys25, Thr26, Ser27, Gly38, Lys39, Tyr41, and Thr44 together coordinate GTP. Thr26 contacts Mg(2+). Residues 35–49 form a switch I region; the sequence is ETFGKQYKQTIGLDF. Mg(2+) is bound by residues Thr44 and Asp68. Residues 68–85 are switch II; that stretch reads DIGGQTIGGKMLDKYIYG. GTP-binding residues include Gly71, Asn129, Lys130, Asp132, Ala160, and Lys161. Position 218 is a cysteine methyl ester (Cys218). Cys218 carries the S-farnesyl cysteine lipid modification. Residues 219 to 221 constitute a propeptide, removed in mature form; that stretch reads AVQ.

It belongs to the small GTPase superfamily. Rab family. As to quaternary structure, interacts (prenylated form) with PDE6D; the interaction promotes RAB28 delivery to the photoreceptor outer segments. Interacts with KCNJ13; the interaction may facilitate cone outer segments phagocytosis. Interacts with RELA; the interaction contributes to RELA transport from cytoplasm to nucleus. Mg(2+) serves as cofactor. Post-translationally, isoprenylated.

The protein localises to the cell membrane. It is found in the cytoplasm. The protein resides in the cytoskeleton. It localises to the cilium basal body. Its subcellular location is the nucleus. It catalyses the reaction GTP + H2O = GDP + phosphate + H(+). Regulated by guanine nucleotide exchange factors (GEFs) which promote the exchange of bound GDP for free GTP. Regulated by GTPase activating proteins (GAPs) which increase the GTP hydrolysis activity. Inhibited by GDP dissociation inhibitors (GDIs). In terms of biological role, the small GTPases Rab are key regulators of intracellular membrane trafficking, from the formation of transport vesicles to their fusion with membranes. Rabs cycle between an inactive GDP-bound form and an active GTP-bound form that is able to recruit to membranes different sets of downstream effectors directly responsible for vesicle formation, movement, tethering and fusion. RAB28 is required for shedding and phagocytosis of cone cell outer segments (OS) discs in the retina. Also participates in nuclear factor kappa-B p65/RELA nuclear transport in endothelial cells. This is Ras-related protein Rab-28 (RAB28) from Bos taurus (Bovine).